The following is a 349-amino-acid chain: MDIKNALSRIVGQLDLTTEEMREVMRQIMTGQCSEAQIGAFLMGMRMKSESIDEIVGAVSVMRELAEKVELQSLDGVVDIVGTGGDGANIFNVSTASSFVLAAAGCPVAKHGNRAVSGKSGSADLLEAAGIYLNLTPTQVARCIDSLGIGFMFAQSHHSAMKHAAGPRRELGLRTLFNMLGPLTNPAGVKHQVVGVFAQTLCRPLAEVLQRLGSKHVLVVHSKDGLDEFSLAAPTFVAELKNGEITEYWVEPEDLGMKSQSLHGLAVESPQASLELIRDALGRRKTENGQKAAEMIVLNAGAALYAADHAMSLKAGVELAHDVLHTGLAWEKLQELGAFTAVFKVENEA.

5-phospho-alpha-D-ribose 1-diphosphate contacts are provided by residues Gly82, 85–86 (GD), 92–95 (NVST), 110–118 (KHGNRAVSG), and Ser122. Position 82 (Gly82) interacts with anthranilate. Mg(2+) is bound at residue Ser94. Anthranilate is bound at residue Asn113. Arg168 is a binding site for anthranilate. 2 residues coordinate Mg(2+): Asp227 and Glu228.

It belongs to the anthranilate phosphoribosyltransferase family. Homodimer. Requires Mg(2+) as cofactor.

The enzyme catalyses N-(5-phospho-beta-D-ribosyl)anthranilate + diphosphate = 5-phospho-alpha-D-ribose 1-diphosphate + anthranilate. Its pathway is amino-acid biosynthesis; L-tryptophan biosynthesis; L-tryptophan from chorismate: step 2/5. Its function is as follows. Catalyzes the transfer of the phosphoribosyl group of 5-phosphorylribose-1-pyrophosphate (PRPP) to anthranilate to yield N-(5'-phosphoribosyl)-anthranilate (PRA). This Pseudomonas putida (strain ATCC 700007 / DSM 6899 / JCM 31910 / BCRC 17059 / LMG 24140 / F1) protein is Anthranilate phosphoribosyltransferase.